Reading from the N-terminus, the 188-residue chain is dCTP deaminase (188 aa).

DCTP is bound by residues 111–116 (KSTYAR), 135–137 (TLE), glutamine 156, tyrosine 170, and glutamine 180. Glutamate 137 (proton donor/acceptor) is an active-site residue.

It belongs to the dCTP deaminase family. Homotrimer.

The catalysed reaction is dCTP + H2O + H(+) = dUTP + NH4(+). Its pathway is pyrimidine metabolism; dUMP biosynthesis; dUMP from dCTP (dUTP route): step 1/2. In terms of biological role, catalyzes the deamination of dCTP to dUTP. The polypeptide is dCTP deaminase (Pseudomonas fluorescens (strain Pf0-1)).